Reading from the N-terminus, the 107-residue chain is Small ribosomal subunit protein bS16m (107 aa).

It belongs to the bacterial ribosomal protein bS16 family. In terms of assembly, component of the mitochondrial small ribosomal subunit (mt-SSU). Mature N.crassa 74S mitochondrial ribosomes consist of a small (37S) and a large (54S) subunit. The 37S small subunit contains a 16S ribosomal RNA (16S mt-rRNA) and 32 different proteins. The 54S large subunit contains a 23S rRNA (23S mt-rRNA) and 42 different proteins.

It is found in the mitochondrion. Its function is as follows. Component of the mitochondrial ribosome (mitoribosome), a dedicated translation machinery responsible for the synthesis of mitochondrial genome-encoded proteins, including at least some of the essential transmembrane subunits of the mitochondrial respiratory chain. The mitoribosomes are attached to the mitochondrial inner membrane and translation products are cotranslationally integrated into the membrane. This is Small ribosomal subunit protein bS16m (cyt-21) from Neurospora crassa (strain ATCC 24698 / 74-OR23-1A / CBS 708.71 / DSM 1257 / FGSC 987).